The sequence spans 511 residues: Potassium voltage-gated channel subfamily A member 10 (511 aa).

Residues 25 to 44 (EPGYATDFDPTSSKGRPGSS) are disordered. A helical membrane pass occupies residues 218 to 238 (VAVVSVLVVVISITIFCLETL). A helical transmembrane segment spans residues 271-292 (FFMVESTCIVWFTFELVLRFVV). Residue Cys293 is the site of S-palmitoyl cysteine attachment. Residues 303 to 323 (IMNIIDIISIIPYFATLITEL) form a helical membrane-spanning segment. Residues 339-358 (ILRIIRLVRVFRIFKLSRHS) form a helical; Voltage-sensor membrane-spanning segment. The helical transmembrane segment at 375 to 395 (LGLLIFFLFIGVILFSSAVYF) threads the bilayer. The short motif at 421 to 426 (TVGYGD) is the Selectivity filter element. A helical membrane pass occupies residues 436–456 (IVGTLCAIAGVLTIALPVPVI). The disordered stretch occupies residues 489-511 (SRMGSTESLNKTNGSCSAEKSRK).

It belongs to the potassium channel family. A (Shaker) (TC 1.A.1.2) subfamily. Kv1.8/KCNA10 sub-subfamily. As to quaternary structure, homotetramer. Interacts with KCN4B/POMP. Interaction with KCN4B/POMP is necessary for the modulation of channel activity by cAMP. Expressed strongly in the inner ear and weakly in skeletal muscle. Not detected in other tissues.

Its subcellular location is the membrane. The enzyme catalyses K(+)(in) = K(+)(out). With respect to regulation, the channel activity is up-regulated by cAMP. In terms of biological role, voltage-gated potassium ion channel that mediates K(+) permeability of excitable membranes. When opened in response to the voltage difference across the membrane, KCNA10 channel selectively allows the flow of potassium ions across the membrane down their electrochemical gradient. The protein is Potassium voltage-gated channel subfamily A member 10 of Mus musculus (Mouse).